The following is a 315-amino-acid chain: Methionyl-tRNA formyltransferase (315 aa).

Position 113–116 (113–116 (SLLP)) interacts with (6S)-5,6,7,8-tetrahydrofolate.

This sequence belongs to the Fmt family.

The catalysed reaction is L-methionyl-tRNA(fMet) + (6R)-10-formyltetrahydrofolate = N-formyl-L-methionyl-tRNA(fMet) + (6S)-5,6,7,8-tetrahydrofolate + H(+). Its function is as follows. Attaches a formyl group to the free amino group of methionyl-tRNA(fMet). The formyl group appears to play a dual role in the initiator identity of N-formylmethionyl-tRNA by promoting its recognition by IF2 and preventing the misappropriation of this tRNA by the elongation apparatus. This chain is Methionyl-tRNA formyltransferase, found in Shigella dysenteriae serotype 1 (strain Sd197).